The following is a 362-amino-acid chain: Endopolygalacturonase II (362 aa).

The first 20 residues, 1–20, serve as a signal peptide directing secretion; it reads MHSFASLLRYGLAAGATLAS. Residues 21–27 constitute a propeptide that is removed on maturation; sequence ASPIEAR. A disulfide bond links Cys30 and Cys45. One copy of the PbH1 1 repeat lies at 156 to 186; it reads SDDITLTDITINNADGDSLGGHNTDAFDVGN. Asp201 acts as the Proton donor in catalysis. Cys203 and Cys219 form a disulfide bridge. PbH1 repeat units follow at residues 209-229, 238-259, 267-289, and 301-322; these read GENIWFTGGTCIGGHGLSIGS, VKNVTIEHSTVSNSENAVRIKT, VSEITYSNIVMSGISDYGVVIQQ, and TNGVTITDVKLESVTGTVDSKA. Residue His223 is part of the active site. Asn240 is a glycosylation site (N-linked (GlcNAc...) asparagine). 2 disulfide bridges follow: Cys329-Cys334 and Cys353-Cys362.

The protein belongs to the glycosyl hydrolase 28 family.

It is found in the secreted. It catalyses the reaction (1,4-alpha-D-galacturonosyl)n+m + H2O = (1,4-alpha-D-galacturonosyl)n + (1,4-alpha-D-galacturonosyl)m.. Involved in maceration and soft-rotting of plant tissue. Hydrolyzes the 1,4-alpha glycosidic bonds of de-esterified pectate in the smooth region of the plant cell wall. The sequence is that of Endopolygalacturonase II (pgaII) from Aspergillus awamori (Black koji mold).